Reading from the N-terminus, the 406-residue chain is 5-cytosine rRNA methyltransferase NSUN4 (406 aa).

Gly207, Gly208, Lys209, Asp226, Arg231, Asp259, Gly260, and Asp277 together coordinate S-adenosyl-L-methionine. The Nucleophile role is filled by Cys332.

It belongs to the class I-like SAM-binding methyltransferase superfamily. RsmB/NOP family.

Its subcellular location is the mitochondrion. It carries out the reaction a cytidine in rRNA + S-adenosyl-L-methionine = a 5-methylcytidine in rRNA + S-adenosyl-L-homocysteine + H(+). The catalysed reaction is a cytidine in mRNA + S-adenosyl-L-methionine = a 5-methylcytidine in mRNA + S-adenosyl-L-homocysteine + H(+). Mitochondrial RNA cytosine C(5)-methyltransferase that methylates cytosine to 5-methylcytosine (m5C) in various RNAs, such as rRNAs, mRNAs and some long non-coding RNAs (lncRNAs). Involved in mitochondrial ribosome small subunit (SSU) maturation by catalyzing methylation of mitochondrial 12S rRNA. In Xenopus laevis (African clawed frog), this protein is 5-cytosine rRNA methyltransferase NSUN4 (nsun4).